The following is a 132-amino-acid chain: Small ribosomal subunit protein uS8 (132 aa).

This sequence belongs to the universal ribosomal protein uS8 family. In terms of assembly, part of the 30S ribosomal subunit. Contacts proteins S5 and S12.

One of the primary rRNA binding proteins, it binds directly to 16S rRNA central domain where it helps coordinate assembly of the platform of the 30S subunit. The polypeptide is Small ribosomal subunit protein uS8 (Clostridium botulinum (strain Alaska E43 / Type E3)).